The chain runs to 694 residues: Elongation factor G (694 aa).

A tr-type G domain is found at 8 to 282 (DRLRNIGIMA…AIVDYLPSPL (275 aa)). GTP-binding positions include 17-24 (AHIDAGKT), 81-85 (DTPGH), and 135-138 (NKMD). Positions 284–303 (IPPVQGTDPETGEPAERKAD) are disordered.

The protein belongs to the TRAFAC class translation factor GTPase superfamily. Classic translation factor GTPase family. EF-G/EF-2 subfamily.

The protein resides in the cytoplasm. Its function is as follows. Catalyzes the GTP-dependent ribosomal translocation step during translation elongation. During this step, the ribosome changes from the pre-translocational (PRE) to the post-translocational (POST) state as the newly formed A-site-bound peptidyl-tRNA and P-site-bound deacylated tRNA move to the P and E sites, respectively. Catalyzes the coordinated movement of the two tRNA molecules, the mRNA and conformational changes in the ribosome. This is Elongation factor G from Symbiobacterium thermophilum (strain DSM 24528 / JCM 14929 / IAM 14863 / T).